We begin with the raw amino-acid sequence, 359 residues long: Sulfate/thiosulfate import ATP-binding protein CysA (359 aa).

The ABC transporter domain occupies 3 to 237 (VRVAGVRKEF…PNSPFVYGFI (235 aa)). 35 to 42 (GPSGSGKT) is a binding site for ATP.

It belongs to the ABC transporter superfamily. Sulfate/tungstate importer (TC 3.A.1.6) family. As to quaternary structure, the complex is composed of two ATP-binding proteins (CysA), two transmembrane proteins (CysT and CysW) and a solute-binding protein (CysP).

It is found in the cell inner membrane. The enzyme catalyses sulfate(out) + ATP + H2O = sulfate(in) + ADP + phosphate + H(+). The catalysed reaction is thiosulfate(out) + ATP + H2O = thiosulfate(in) + ADP + phosphate + H(+). Its function is as follows. Part of the ABC transporter complex CysAWTP involved in sulfate/thiosulfate import. Responsible for energy coupling to the transport system. The chain is Sulfate/thiosulfate import ATP-binding protein CysA from Brucella melitensis biotype 1 (strain ATCC 23456 / CCUG 17765 / NCTC 10094 / 16M).